Consider the following 525-residue polypeptide: Ubiquitin carboxyl-terminal hydrolase 22 (525 aa).

The UBP-type zinc-finger motif lies at 21-138 (PGCSHLGSFK…KEEQRKAWKM (118 aa)). Residues Cys23, His25, Cys63, Cys66, Cys76, Cys79, Cys84, His89, His93, His99, Cys112, and Cys115 each coordinate Zn(2+). At Lys129 the chain carries N6-acetyllysine. Position 147 is a phosphothreonine (Thr147). Positions 176–520 (RGLINLGNTC…EGYLLFYHKQ (345 aa)) constitute a USP domain. Cys185 acts as the Nucleophile in catalysis. Phosphoserine is present on Ser237. The Proton acceptor role is filled by His479.

This sequence belongs to the peptidase C19 family. UBP8 subfamily. Component of some SAGA transcription coactivator-HAT complexes, at least composed of ATXN7, ATXN7L3, ENY2, GCN5L2, SUPT3H, TAF10, TRRAP and USP22. Within the SAGA complex, ATXN7L3, ENY2 and USP22 form a subcomplex required for histone deubiquitination. Interacts directly with ATXN7L3; leading to its recruitment to the SAGA complex. Interacts with ATXN7L3 and weakly with ATXN7L3B. Interacts with MED1. In terms of processing, phosphorylated in G2/M phase, but not in G1 phase by CDK1. Post-translationally, ubiquitinated and subsequently degraded in a CDC20-dependent manner. Highly expressed in brain and weakly in other organs.

It localises to the nucleus. The protein localises to the cytoplasm. It carries out the reaction Thiol-dependent hydrolysis of ester, thioester, amide, peptide and isopeptide bonds formed by the C-terminal Gly of ubiquitin (a 76-residue protein attached to proteins as an intracellular targeting signal).. In terms of biological role, deubiquitinase that plays a role in several cellular processes including transcriptional regulation, cell cycle progression or innate immunity. As part of the transcription regulatory histone acetylation (HAT) complex SAGA, catalyzes the deubiquitination of both histones H2A and H2B, thereby acting as a transcriptional coactivator. Recruited to specific gene promoters by activators such as MYC, where it is required for transcription. Facilitates cell-cycle progression by stabilizing CCNB1 and antagonizing its proteasome-mediated degradation in a cell cycle-specific manner. Modulates cell cycle progression and apoptosis also by antagonizing TP53 transcriptional activation through deacetylase SIRT1 stabilization. Plays multiple roles in immunity and inflammation. Participates in antiviral response by deubiquitinating the importin KPNA2, leading to IRF3 nuclear translocation and subsequent type I interferon production. Acts as a central regulator of type III IFN signaling by negatively regulating STING1 activation and ubiquitination. Inhibits NLRP3 inflammasome activation by promoting NLRP3 degradation through ATG5-dependent autophagy. Deubiquitinates CD274 to induce its stabilization and thereby participates in maintenance of immune tolerance to self. Controls necroptotic cell death by regulating RIPK3 phosphorylation and ubiquitination. During bacterial infection, promotes pro-inflammatory response by targeting TRAF6 and removing its 'Lys-48'-linked polyubiquitination. The polypeptide is Ubiquitin carboxyl-terminal hydrolase 22 (Usp22) (Mus musculus (Mouse)).